Consider the following 69-residue polypeptide: Small, acid-soluble spore protein C1 (69 aa).

This sequence belongs to the alpha/beta-type SASP family.

Functionally, SASP are bound to spore DNA. They are double-stranded DNA-binding proteins that cause DNA to change to an a-like conformation. They protect the DNA backbone from chemical and enzymatic cleavage and are thus involved in dormant spore's high resistance to UV light. The protein is Small, acid-soluble spore protein C1 (SASP-C1) of Priestia megaterium (Bacillus megaterium).